The following is a 675-amino-acid chain: DNA ligase (675 aa).

Residues 33-37, 82-83, and Glu115 contribute to the NAD(+) site; these read DAEYD and SL. Lys117 acts as the N6-AMP-lysine intermediate in catalysis. NAD(+) is bound by residues Arg138, Glu175, Lys293, and Lys317. Zn(2+) is bound by residues Cys411, Cys414, Cys429, and Cys435. Positions 594–675 constitute a BRCT domain; that stretch reads IADNPLKDKT…LIGYFTTIVS (82 aa).

Belongs to the NAD-dependent DNA ligase family. LigA subfamily. Mg(2+) is required as a cofactor. The cofactor is Mn(2+).

The catalysed reaction is NAD(+) + (deoxyribonucleotide)n-3'-hydroxyl + 5'-phospho-(deoxyribonucleotide)m = (deoxyribonucleotide)n+m + AMP + beta-nicotinamide D-nucleotide.. In terms of biological role, DNA ligase that catalyzes the formation of phosphodiester linkages between 5'-phosphoryl and 3'-hydroxyl groups in double-stranded DNA using NAD as a coenzyme and as the energy source for the reaction. It is essential for DNA replication and repair of damaged DNA. This is DNA ligase from Glaesserella parasuis serovar 5 (strain SH0165) (Haemophilus parasuis).